Consider the following 238-residue polypeptide: Probable transcriptional regulatory protein MGAS2096_Spy0287 (238 aa).

It belongs to the TACO1 family. YeeN subfamily.

Its subcellular location is the cytoplasm. In Streptococcus pyogenes serotype M12 (strain MGAS2096), this protein is Probable transcriptional regulatory protein MGAS2096_Spy0287.